A 157-amino-acid polypeptide reads, in one-letter code: ATP synthase subunit b (157 aa).

A helical membrane pass occupies residues 1–21 (MHFLDESFWLAISFIIFVYLI).

Belongs to the ATPase B chain family. F-type ATPases have 2 components, F(1) - the catalytic core - and F(0) - the membrane proton channel. F(1) has five subunits: alpha(3), beta(3), gamma(1), delta(1), epsilon(1). F(0) has three main subunits: a(1), b(2) and c(10-14). The alpha and beta chains form an alternating ring which encloses part of the gamma chain. F(1) is attached to F(0) by a central stalk formed by the gamma and epsilon chains, while a peripheral stalk is formed by the delta and b chains.

It is found in the cell inner membrane. Its function is as follows. F(1)F(0) ATP synthase produces ATP from ADP in the presence of a proton or sodium gradient. F-type ATPases consist of two structural domains, F(1) containing the extramembraneous catalytic core and F(0) containing the membrane proton channel, linked together by a central stalk and a peripheral stalk. During catalysis, ATP synthesis in the catalytic domain of F(1) is coupled via a rotary mechanism of the central stalk subunits to proton translocation. In terms of biological role, component of the F(0) channel, it forms part of the peripheral stalk, linking F(1) to F(0). The sequence is that of ATP synthase subunit b from Rickettsia bellii (strain RML369-C).